Reading from the N-terminus, the 380-residue chain is Capsular polysaccharide biosynthesis glycosyltransferase CapM (380 aa).

Belongs to the glycosyltransferase group 1 family. Glycosyltransferase 4 subfamily.

Its pathway is capsule biogenesis; capsule polysaccharide biosynthesis. Functionally, required for the biosynthesis of type 1 capsular polysaccharide. This Staphylococcus aureus protein is Capsular polysaccharide biosynthesis glycosyltransferase CapM (capM).